A 419-amino-acid chain; its full sequence is UDP-N-acetylglucosamine 1-carboxyvinyltransferase (419 aa).

Phosphoenolpyruvate is bound at residue K22–N23. R91 lines the UDP-N-acetyl-alpha-D-glucosamine pocket. C115 functions as the Proton donor in the catalytic mechanism. The residue at position 115 (C115) is a 2-(S-cysteinyl)pyruvic acid O-phosphothioketal. Residues R120–L124, K160–V163, D305, and V327 contribute to the UDP-N-acetyl-alpha-D-glucosamine site.

The protein belongs to the EPSP synthase family. MurA subfamily.

Its subcellular location is the cytoplasm. It carries out the reaction phosphoenolpyruvate + UDP-N-acetyl-alpha-D-glucosamine = UDP-N-acetyl-3-O-(1-carboxyvinyl)-alpha-D-glucosamine + phosphate. It functions in the pathway cell wall biogenesis; peptidoglycan biosynthesis. In terms of biological role, cell wall formation. Adds enolpyruvyl to UDP-N-acetylglucosamine. In Salmonella agona (strain SL483), this protein is UDP-N-acetylglucosamine 1-carboxyvinyltransferase.